The sequence spans 262 residues: Adenosylcobinamide-GDP ribazoletransferase (262 aa).

The next 6 membrane-spanning stretches (helical) occupy residues 43–63 (YFGL…WLTQ), 66–86 (LPAG…TGGF), 120–140 (GALA…ELAL), 146–166 (AGSA…SIIF), 191–211 (LLIL…LAAL), and 242–262 (AAQQ…GNIL).

This sequence belongs to the CobS family. Mg(2+) is required as a cofactor.

It localises to the cell inner membrane. It catalyses the reaction alpha-ribazole + adenosylcob(III)inamide-GDP = adenosylcob(III)alamin + GMP + H(+). The enzyme catalyses alpha-ribazole 5'-phosphate + adenosylcob(III)inamide-GDP = adenosylcob(III)alamin 5'-phosphate + GMP + H(+). It participates in cofactor biosynthesis; adenosylcobalamin biosynthesis; adenosylcobalamin from cob(II)yrinate a,c-diamide: step 7/7. Functionally, joins adenosylcobinamide-GDP and alpha-ribazole to generate adenosylcobalamin (Ado-cobalamin). Also synthesizes adenosylcobalamin 5'-phosphate from adenosylcobinamide-GDP and alpha-ribazole 5'-phosphate. This Shewanella baltica (strain OS155 / ATCC BAA-1091) protein is Adenosylcobinamide-GDP ribazoletransferase.